The sequence spans 297 residues: T-cell leukemia homeobox protein 1 (297 aa).

Positions 153–174 (DRFTGHPYQNRTPPKKKKPRTS) are disordered. Residues 168-227 (KKKPRTSFTRLQICELEKRFHRQKYLASAERAALAKALKMTDAQVKTWFQNRRTKWRRQT) constitute a DNA-binding region (homeobox).

It is found in the nucleus. Its function is as follows. Seems to be involved in the development of cranial sensory innervation from peripheral ganglia. The sequence is that of T-cell leukemia homeobox protein 1 (TLX1) from Gallus gallus (Chicken).